A 612-amino-acid polypeptide reads, in one-letter code: Sulfite reductase [NADPH] hemoprotein beta-component (612 aa).

The interval 1–26 (MDDHKPIETPDGPAVDTPGIGARRYE) is disordered. Residues Cys-469, Cys-475, Cys-514, and Cys-518 each contribute to the [4Fe-4S] cluster site. Cys-518 contributes to the siroheme binding site.

It belongs to the nitrite and sulfite reductase 4Fe-4S domain family. Alpha(8)-beta(8). The alpha component is a flavoprotein, the beta component is a hemoprotein. The cofactor is siroheme. It depends on [4Fe-4S] cluster as a cofactor.

It carries out the reaction hydrogen sulfide + 3 NADP(+) + 3 H2O = sulfite + 3 NADPH + 4 H(+). It participates in sulfur metabolism; hydrogen sulfide biosynthesis; hydrogen sulfide from sulfite (NADPH route): step 1/1. Its function is as follows. Component of the sulfite reductase complex that catalyzes the 6-electron reduction of sulfite to sulfide. This is one of several activities required for the biosynthesis of L-cysteine from sulfate. The polypeptide is Sulfite reductase [NADPH] hemoprotein beta-component (Methylorubrum extorquens (strain ATCC 14718 / DSM 1338 / JCM 2805 / NCIMB 9133 / AM1) (Methylobacterium extorquens)).